The following is a 634-amino-acid chain: (-)-limonene synthase, chloroplastic (634 aa).

A chloroplast-targeting transit peptide spans 1 to 21; it reads MSPVSAIPLAYKLCLPRSLIS. (2E)-geranyl diphosphate-binding residues include Arg-348, Asp-385, Asp-389, Arg-526, and Gly-529. Residues Asp-385 and Asp-389 each contribute to the Mg(2+) site. A DDXXD motif motif is present at residues 385–389; sequence DDIYD. Positions 529 and 537 each coordinate Mg(2+).

This sequence belongs to the terpene synthase family. Tpsb subfamily. As to quaternary structure, monomer. Requires Mg(2+) as cofactor. The cofactor is Mn(2+).

The protein localises to the plastid. Its subcellular location is the chloroplast. The enzyme catalyses (2E)-geranyl diphosphate = (4S)-limonene + diphosphate. Its pathway is secondary metabolite biosynthesis; terpenoid biosynthesis. It participates in terpene metabolism; oleoresin biosynthesis. Monoterpene synthase (mono-TPS) involved in the biosynthesis of monoterpene natural products. Catalyzes the conversion of (2E)-geranyl diphosphate (GPP) into (-)-limonene. Not able to use geranylgeranyl pyrophosphate (GGPP) and farnesyl pyrophosphate (FPP) as substrates. The protein is (-)-limonene synthase, chloroplastic of Picea sitchensis (Sitka spruce).